The chain runs to 162 residues: NADH-quinone oxidoreductase subunit I (162 aa).

2 4Fe-4S ferredoxin-type domains span residues 53 to 83 (QRRYANGEERCIACKLCEAVCPAMAISIESE) and 93 to 122 (SRYDIDLTKCIFCGFCEEACPVDAIVETHI). Positions 63, 66, 69, 73, 102, 105, 108, and 112 each coordinate [4Fe-4S] cluster.

Belongs to the complex I 23 kDa subunit family. As to quaternary structure, NDH-1 is composed of 14 different subunits. Subunits NuoA, H, J, K, L, M, N constitute the membrane sector of the complex. [4Fe-4S] cluster is required as a cofactor.

It is found in the cell inner membrane. It carries out the reaction a quinone + NADH + 5 H(+)(in) = a quinol + NAD(+) + 4 H(+)(out). In terms of biological role, NDH-1 shuttles electrons from NADH, via FMN and iron-sulfur (Fe-S) centers, to quinones in the respiratory chain. The immediate electron acceptor for the enzyme in this species is believed to be ubiquinone. Couples the redox reaction to proton translocation (for every two electrons transferred, four hydrogen ions are translocated across the cytoplasmic membrane), and thus conserves the redox energy in a proton gradient. This chain is NADH-quinone oxidoreductase subunit I, found in Chromobacterium violaceum (strain ATCC 12472 / DSM 30191 / JCM 1249 / CCUG 213 / NBRC 12614 / NCIMB 9131 / NCTC 9757 / MK).